The following is a 635-amino-acid chain: Extracellular metalloproteinase 1 (635 aa).

An N-terminal signal peptide occupies residues 1–19 (MHGLLLAAGLLSLPLHVLA). Positions 20 to 246 (HPQPSTSTSL…VHNVVDYVAH (227 aa)) are excised as a propeptide. Asn287 carries an N-linked (GlcNAc...) asparagine glycan. His430 provides a ligand contact to Zn(2+). Residue Glu431 is part of the active site. His434 contributes to the Zn(2+) binding site. N-linked (GlcNAc...) asparagine glycans are attached at residues Asn475, Asn594, and Asn623.

It belongs to the peptidase M36 family. Zn(2+) serves as cofactor.

It is found in the secreted. Its function is as follows. Secreted metalloproteinase probably acting as a virulence factor. The sequence is that of Extracellular metalloproteinase 1 (MEP1) from Trichophyton tonsurans (Scalp ringworm fungus).